Here is a 165-residue protein sequence, read N- to C-terminus: MVNPGSSSQPPPVTASTLSWKRCAGCGGKIADRFLLYAMDSYWHSRCLKCSCCQAQLGEIGTSCYTKSGMILCRNDYIRLFGNSGACSACGQSIPASELVMRAQGNVYHLKCFTCSTCRNRLVPGDRFHYINGSLFCEHDRPTALINGHLNSLQSNPLLPDQKVC.

2 consecutive LIM zinc-binding domains span residues 21–83 and 85–147; these read KRCA…LFGN and GACS…ALIN.

Its function is as follows. Acts as a positive cofactor of GATA transcription factors to establish the identity of the ventral mesoderm during gastrulation. Down-regulation in the dorsal mesoderm is necessary for the proper formation of this territory since, when present, lmo4 may bind ldb1 and restrict the availability of this cofactor for Spemman organizer transcription factors. At neurula stages, suppresses primary neuron differentiation and modulates gene expression at the Isthmic Organizer of the midbrain-hindbrain boundary. This is LIM domain transcription factor LMO4.2 (lmo4.2) from Xenopus tropicalis (Western clawed frog).